Here is a 296-residue protein sequence, read N- to C-terminus: Decaprenyl diphosphate synthase (296 aa).

The disordered stretch occupies residues 1 to 24 (MARDARKRTSSNFPQLPPAPDDYP). Aspartate 76 is an active-site residue. Aspartate 76 contributes to the Mg(2+) binding site. Residues 76 to 80 (DGNGR), tryptophan 81, arginine 89, histidine 93, 121 to 124 (STEN), tryptophan 125, arginine 127, arginine 168, arginine 244, and 250 to 252 (RSS) each bind substrate. Catalysis depends on asparagine 124, which acts as the Proton acceptor. Glutamate 263 provides a ligand contact to Mg(2+). 292-294 (RFG) contacts substrate.

Belongs to the UPP synthase family. In terms of assembly, homodimer. The cofactor is Mg(2+). Mn(2+) serves as cofactor.

Its subcellular location is the cell membrane. It catalyses the reaction (2Z,6E)-farnesyl diphosphate + 7 isopentenyl diphosphate = (2Z,6Z,10Z,14Z,18Z,22Z,26Z,30Z,34E)-decaprenyl diphosphate + 7 diphosphate. It carries out the reaction n isopentenyl diphosphate + (2E,6E)-farnesyl diphosphate = a di-trans,poly-cis-polyprenyl diphosphate + n diphosphate. Activated by dithiothreitol and inhibited by EDTA. Its function is as follows. Catalyzes the sequential condensation of isopentenyl diphosphate (IPP) in the cis configuration with (2Z,6E)-farnesyl diphosphate (Z-FPP or EZ-FPP) generating the 50 carbon product trans,polycis-decaprenyl diphosphate. When (2E,6E)-farnesyl diphosphate (E-FPP or EE-FPP) is used in vitro, both primary products decaprenyl diphosphate and (2E,6E,10E)-geranylgeranyl diphosphate (EEE-GGPP) are synthesized. M.tuberculosis does not synthesize (2E,6E,10Z)-geranylgeranyl diphosphate (EEZ-GGPP) and heptaprenyl diphosphate. Can also accept many different allylic substrates, including E-geranyl diphosphate (E-GPP), neryl diphosphate (NPP), and all-trans-geranyl-geranyl diphosphate. The polypeptide is Decaprenyl diphosphate synthase (uppS) (Mycobacterium tuberculosis (strain ATCC 25618 / H37Rv)).